We begin with the raw amino-acid sequence, 190 residues long: Potassium-transporting ATPase KdpC subunit (190 aa).

Residues 7–27 form a helical membrane-spanning segment; sequence PALLMLLVWTLITGVFYPVLV.

The protein belongs to the KdpC family. The system is composed of three essential subunits: KdpA, KdpB and KdpC.

The protein localises to the cell inner membrane. Part of the high-affinity ATP-driven potassium transport (or Kdp) system, which catalyzes the hydrolysis of ATP coupled with the electrogenic transport of potassium into the cytoplasm. This subunit acts as a catalytic chaperone that increases the ATP-binding affinity of the ATP-hydrolyzing subunit KdpB by the formation of a transient KdpB/KdpC/ATP ternary complex. The protein is Potassium-transporting ATPase KdpC subunit of Methylococcus capsulatus (strain ATCC 33009 / NCIMB 11132 / Bath).